The sequence spans 528 residues: 2-isopropylmalate synthase (528 aa).

The 268-residue stretch at 12-279 (IRIFDTTLRD…DSSINTPRIV (268 aa)) folds into the Pyruvate carboxyltransferase domain. Residues D21, H214, H216, and N250 each coordinate Mn(2+). The regulatory domain stretch occupies residues 401–528 (RLASMTISDV…TTEAPAPATA (128 aa)).

The protein belongs to the alpha-IPM synthase/homocitrate synthase family. LeuA type 1 subfamily. Homodimer. Mn(2+) serves as cofactor.

The protein localises to the cytoplasm. The enzyme catalyses 3-methyl-2-oxobutanoate + acetyl-CoA + H2O = (2S)-2-isopropylmalate + CoA + H(+). It functions in the pathway amino-acid biosynthesis; L-leucine biosynthesis; L-leucine from 3-methyl-2-oxobutanoate: step 1/4. Catalyzes the condensation of the acetyl group of acetyl-CoA with 3-methyl-2-oxobutanoate (2-ketoisovalerate) to form 3-carboxy-3-hydroxy-4-methylpentanoate (2-isopropylmalate). The protein is 2-isopropylmalate synthase of Stenotrophomonas maltophilia (strain R551-3).